The sequence spans 79 residues: Sec-independent protein translocase protein TatA (79 aa).

A helical transmembrane segment spans residues 1 to 21; that stretch reads MGGFTSIWHWVIVLLVIVLLF. The tract at residues 46–79 is disordered; it reads DDEEEAKNEPKTLDAQATQTKVHETSEIKSKQES. The segment covering 66 to 79 has biased composition (basic and acidic residues); that stretch reads KVHETSEIKSKQES.

This sequence belongs to the TatA/E family. The Tat system comprises two distinct complexes: a TatABC complex, containing multiple copies of TatA, TatB and TatC subunits, and a separate TatA complex, containing only TatA subunits. Substrates initially bind to the TatABC complex, which probably triggers association of the separate TatA complex to form the active translocon.

It is found in the cell inner membrane. In terms of biological role, part of the twin-arginine translocation (Tat) system that transports large folded proteins containing a characteristic twin-arginine motif in their signal peptide across membranes. TatA could form the protein-conducting channel of the Tat system. In Helicobacter pylori (strain HPAG1), this protein is Sec-independent protein translocase protein TatA.